The chain runs to 126 residues: Probable prefoldin subunit 4 (126 aa).

The protein belongs to the prefoldin subunit beta family. Heterohexamer of two PFD-alpha type and four PFD-beta type subunits.

Binds specifically to cytosolic chaperonin (c-CPN) and transfers target proteins to it. Binds to nascent polypeptide chain and promotes folding in an environment in which there are many competing pathways for nonnative proteins. Appears to play a non-essential role. This is Probable prefoldin subunit 4 from Caenorhabditis briggsae.